A 61-amino-acid chain; its full sequence is Small ribosomal subunit protein uS14 (61 aa).

Residues Cys24, Cys27, Cys40, and Cys43 each contribute to the Zn(2+) site.

This sequence belongs to the universal ribosomal protein uS14 family. Zinc-binding uS14 subfamily. Part of the 30S ribosomal subunit. Contacts proteins S3 and S10. Requires Zn(2+) as cofactor.

Its function is as follows. Binds 16S rRNA, required for the assembly of 30S particles and may also be responsible for determining the conformation of the 16S rRNA at the A site. This is Small ribosomal subunit protein uS14 from Pseudothermotoga lettingae (strain ATCC BAA-301 / DSM 14385 / NBRC 107922 / TMO) (Thermotoga lettingae).